The chain runs to 120 residues: NAD(P)H-quinone oxidoreductase subunit 3, chloroplastic (120 aa).

3 helical membrane-spanning segments follow: residues 9–29 (IFWT…SISG), 64–84 (MFAL…PWAM), and 88–108 (VLGV…VVGL).

It belongs to the complex I subunit 3 family. In terms of assembly, NDH is composed of at least 16 different subunits, 5 of which are encoded in the nucleus.

The protein localises to the plastid. It localises to the chloroplast thylakoid membrane. The enzyme catalyses a plastoquinone + NADH + (n+1) H(+)(in) = a plastoquinol + NAD(+) + n H(+)(out). It carries out the reaction a plastoquinone + NADPH + (n+1) H(+)(in) = a plastoquinol + NADP(+) + n H(+)(out). NDH shuttles electrons from NAD(P)H:plastoquinone, via FMN and iron-sulfur (Fe-S) centers, to quinones in the photosynthetic chain and possibly in a chloroplast respiratory chain. The immediate electron acceptor for the enzyme in this species is believed to be plastoquinone. Couples the redox reaction to proton translocation, and thus conserves the redox energy in a proton gradient. This chain is NAD(P)H-quinone oxidoreductase subunit 3, chloroplastic, found in Hordeum vulgare (Barley).